Reading from the N-terminus, the 250-residue chain is Type III pantothenate kinase (250 aa).

An ATP-binding site is contributed by 13 to 20 (DVGNSYLK). 110–113 (GNDL) is a binding site for substrate. Asp-112 (proton acceptor) is an active-site residue. ATP is bound at residue Thr-134. Thr-186 is a substrate binding site.

This sequence belongs to the type III pantothenate kinase family. In terms of assembly, homodimer. NH4(+) is required as a cofactor. It depends on K(+) as a cofactor.

Its subcellular location is the cytoplasm. The catalysed reaction is (R)-pantothenate + ATP = (R)-4'-phosphopantothenate + ADP + H(+). It functions in the pathway cofactor biosynthesis; coenzyme A biosynthesis; CoA from (R)-pantothenate: step 1/5. In terms of biological role, catalyzes the phosphorylation of pantothenate (Pan), the first step in CoA biosynthesis. The protein is Type III pantothenate kinase of Mycoplasmopsis synoviae (strain 53) (Mycoplasma synoviae).